Consider the following 355-residue polypeptide: Peptide chain release factor 1 (355 aa).

Position 231 is an N5-methylglutamine (Gln-231). Residues 283–292 (LAKETSERKS) are compositionally biased toward basic and acidic residues. The disordered stretch occupies residues 283–306 (LAKETSERKSQVGTGDRSGRIRTY).

It belongs to the prokaryotic/mitochondrial release factor family. Methylated by PrmC. Methylation increases the termination efficiency of RF1.

Its subcellular location is the cytoplasm. Functionally, peptide chain release factor 1 directs the termination of translation in response to the peptide chain termination codons UAG and UAA. The sequence is that of Peptide chain release factor 1 from Campylobacter concisus (strain 13826).